The primary structure comprises 522 residues: Glutamate--cysteine ligase (522 aa).

It belongs to the glutamate--cysteine ligase type 1 family. Type 1 subfamily.

The catalysed reaction is L-cysteine + L-glutamate + ATP = gamma-L-glutamyl-L-cysteine + ADP + phosphate + H(+). The protein operates within sulfur metabolism; glutathione biosynthesis; glutathione from L-cysteine and L-glutamate: step 1/2. This Shewanella halifaxensis (strain HAW-EB4) protein is Glutamate--cysteine ligase.